A 132-amino-acid chain; its full sequence is Small ribosomal subunit protein uS8 (132 aa).

It belongs to the universal ribosomal protein uS8 family. In terms of assembly, part of the 30S ribosomal subunit. Contacts proteins S5 and S12.

One of the primary rRNA binding proteins, it binds directly to 16S rRNA central domain where it helps coordinate assembly of the platform of the 30S subunit. This Streptomyces griseus subsp. griseus (strain JCM 4626 / CBS 651.72 / NBRC 13350 / KCC S-0626 / ISP 5235) protein is Small ribosomal subunit protein uS8.